Consider the following 542-residue polypeptide: Peptide chain release factor 3 (542 aa).

The 269-residue stretch at 11 to 279 (EKRRTFAIIS…AYVEYAPSPR (269 aa)) folds into the tr-type G domain. Residues 20–27 (SHPDAGKT), 88–92 (DTPGH), and 142–145 (NKLD) each bind GTP.

Belongs to the TRAFAC class translation factor GTPase superfamily. Classic translation factor GTPase family. PrfC subfamily.

The protein localises to the cytoplasm. In terms of biological role, increases the formation of ribosomal termination complexes and stimulates activities of RF-1 and RF-2. It binds guanine nucleotides and has strong preference for UGA stop codons. It may interact directly with the ribosome. The stimulation of RF-1 and RF-2 is significantly reduced by GTP and GDP, but not by GMP. In Nitrosococcus oceani (strain ATCC 19707 / BCRC 17464 / JCM 30415 / NCIMB 11848 / C-107), this protein is Peptide chain release factor 3.